The following is an 87-amino-acid chain: KTLLLTLVVVTIICLDFGYTRICFKTPYVKSETCPPGQELCYTKTWCDRFCSIRGKVIELGCTATCPRAEPKEDTTCCSKDNCNPHP.

The signal sequence occupies residues 1 to 20 (KTLLLTLVVVTIICLDFGYT). 5 disulfides stabilise this stretch: cysteine 23/cysteine 41, cysteine 34/cysteine 62, cysteine 47/cysteine 51, cysteine 66/cysteine 77, and cysteine 78/cysteine 83.

The protein belongs to the three-finger toxin family. Long-chain subfamily. Type II alpha-neurotoxin sub-subfamily. In terms of tissue distribution, expressed by the venom gland.

It localises to the secreted. Binds with high affinity to muscular (alpha-1/CHRNA1) and neuronal (alpha-7/CHRNA7) nicotinic acetylcholine receptor (nAChR) and inhibits acetylcholine from binding to the receptor, thereby impairing neuromuscular and neuronal transmission. The protein is Long neurotoxin LlLong of Laticauda laticaudata (Blue-ringed sea krait).